The sequence spans 98 residues: Ribonuclease kappa (98 aa).

2 helical membrane-spanning segments follow: residues 13–33 and 65–85; these read ACGIVLSAWGVIMLIMLGIFF and VSYNCFIAASLYLLLGGFSFC.

It belongs to the RNase K family. In terms of assembly, interacts with the proton translocation complex V0 of the V-ATPase. Interacts with ATP6AP1. In terms of tissue distribution, expressed in brain (at protein level).

The protein resides in the endomembrane system. It localises to the cytoplasmic vesicle. The protein localises to the clathrin-coated vesicle membrane. In terms of biological role, endoribonuclease which preferentially cleaves ApU and ApG phosphodiester bonds. Hydrolyzes UpU bonds at a lower rate. Regulates the activity of vacuolar (H+)-ATPase (V-ATPase) which is responsible for acidifying and maintaining the pH of intracellular compartments. Required at an early stage of receptor-mediated endocytosis. This Bos taurus (Bovine) protein is Ribonuclease kappa (RNASEK).